We begin with the raw amino-acid sequence, 2026 residues long: Fatty acid synthase subunit beta (2026 aa).

Positions 148 to 526 are acetyltransferase (AT) domain; the sequence is ILMAFGGQGS…VDGRGVRIIA (379 aa). The For acetyltransferase activity role is filled by Ser-268. The interval 579-824 is enoyl reductase (ER) domain; sequence SQLLQAPPII…LILAAAGVAD (246 aa). Residues 1130–1604 are dehydratase (DH) domain; that stretch reads SQVTGSVRSA…LPGDQLTVRI (475 aa). Positions 1512 to 1625 constitute a MaoC-like domain; that stretch reads PGLIDNGSRT…LSVAAYREGT (114 aa). The tract at residues 1643-2016 is malonyl/palmitoyl transferase (MT/PT) domain; the sequence is YLFTGQGSQA…LEEAAAVTGS (374 aa). Ser-1788 (for malonyltransferase activity) is an active-site residue.

The protein belongs to the fungal fatty acid synthetase subunit beta family. In terms of assembly, [Alpha(6)beta(6)] hexamers of two multifunctional subunits (alpha and beta).

It catalyses the reaction acetyl-CoA + n malonyl-CoA + 2n NADPH + 4n H(+) = a long-chain-acyl-CoA + n CoA + n CO2 + 2n NADP(+).. It carries out the reaction holo-[ACP] + acetyl-CoA = acetyl-[ACP] + CoA. The catalysed reaction is holo-[ACP] + malonyl-CoA = malonyl-[ACP] + CoA. The enzyme catalyses a (3R)-hydroxyacyl-[ACP] = a (2E)-enoyl-[ACP] + H2O. It catalyses the reaction a 2,3-saturated acyl-[ACP] + NAD(+) = a (2E)-enoyl-[ACP] + NADH + H(+). It carries out the reaction (9Z)-octadecenoyl-[ACP] + H2O = (9Z)-octadecenoate + holo-[ACP] + H(+). The protein operates within secondary metabolite biosynthesis. Its function is as follows. Fatty acid synthase beta subunit; part of the gene cluster that mediates the biosynthesis of oryzines, natural products with an unusual maleidride backbone. The two subunits of the fungal fatty acid synthase oryfasA and oryfasB probably form octenoic acid. This fatty acid is most likely activated by the acyl-CoA ligase oryP to give octenyl-CoA before the citrate synthase-like protein oryE catalyzes condensation with oxaloacetate to form tricarboxylic acid. The next steps of the pathways are conjectural, but a favorite possible route has been proposed, beginning with decarboxylation and concomitant dehydration by the decarboxylase oryM, followed by tautomerization, which may lead to the production of a diene intermediate. Reduction of this diene intermediate could give the known metabolite piliformic acid. On the pathway to oryzine B and oryzine A, however, hydroxylation of the diene by the alpha-ketoglutarate-dependent dioxygenase oryG and lactonisation by the lactonohydrolases oryH or oryL could give oryzine B directly. Finally, enoyl reduction by the dehydrogenase oryD would then convert oryzine B into oryzine A. This is Fatty acid synthase subunit beta from Aspergillus oryzae (strain ATCC 42149 / RIB 40) (Yellow koji mold).